The chain runs to 146 residues: MQKKITIYTDGACSGNPGKGGWGAMLMYGDAVRELSGYSPATTNNRMELTAAIEALRALKEPCSVALYSDSSYVVNAFREGWLDRWTRNNWKTAAKKNVENTDLWKQILELTARHTVTFHKVKGHSDNPYNNRCDELARQAIQKKP.

In terms of domain architecture, RNase H type-1 spans 1–143; it reads MQKKITIYTD…CDELARQAIQ (143 aa). 4 residues coordinate Mg(2+): Asp-10, Glu-48, Asp-70, and Asp-135.

This sequence belongs to the RNase H family. Monomer. Requires Mg(2+) as cofactor.

Its subcellular location is the cytoplasm. It carries out the reaction Endonucleolytic cleavage to 5'-phosphomonoester.. Functionally, endonuclease that specifically degrades the RNA of RNA-DNA hybrids. The sequence is that of Ribonuclease H from Chlorobium luteolum (strain DSM 273 / BCRC 81028 / 2530) (Pelodictyon luteolum).